The primary structure comprises 96 residues: Small ribosomal subunit protein bS6 (96 aa).

It belongs to the bacterial ribosomal protein bS6 family.

Functionally, binds together with bS18 to 16S ribosomal RNA. In Streptococcus thermophilus (strain ATCC BAA-491 / LMD-9), this protein is Small ribosomal subunit protein bS6.